Consider the following 725-residue polypeptide: DNA replication licensing factor MCM7 (725 aa).

The MCM domain maps to 333-538 (IYNKLARSLA…METDLEMARH (206 aa)). 383–390 (GDPGVAKS) serves as a coordination point for ATP. The Arginine finger motif lies at 515–518 (SRFD).

This sequence belongs to the MCM family. As to quaternary structure, component of the minichromosome maintenance (MCM) complex, a heterotetramer composed of MCM2, MCM3, MCM4, MCM5, MCM6 and MCM7.

The protein resides in the nucleus. The enzyme catalyses ATP + H2O = ADP + phosphate + H(+). In terms of biological role, probable component of the MCM2-7 complex (MCM complex) that may function as a DNA helicase and which is essential to undergo a single round of replication initiation and elongation per cell cycle in eukaryotic cells. This is DNA replication licensing factor MCM7 (MCM7) from Oryza sativa subsp. indica (Rice).